The chain runs to 443 residues: Tol-Pal system protein TolB (443 aa).

The signal sequence occupies residues 1–24 (MSFQIRVFTAILAVLSLFTAPVLA). Residues 424 to 443 (LRPVRTPEGGSDPSWSPLQR) are disordered.

The protein belongs to the TolB family. The Tol-Pal system is composed of five core proteins: the inner membrane proteins TolA, TolQ and TolR, the periplasmic protein TolB and the outer membrane protein Pal. They form a network linking the inner and outer membranes and the peptidoglycan layer.

Its subcellular location is the periplasm. In terms of biological role, part of the Tol-Pal system, which plays a role in outer membrane invagination during cell division and is important for maintaining outer membrane integrity. The polypeptide is Tol-Pal system protein TolB (Roseobacter denitrificans (strain ATCC 33942 / OCh 114) (Erythrobacter sp. (strain OCh 114))).